A 209-amino-acid chain; its full sequence is Large ribosomal subunit protein uL3 (209 aa).

Residues Thr133–Pro152 form a disordered region. Position 150 is an N5-methylglutamine (Gln150).

Belongs to the universal ribosomal protein uL3 family. In terms of assembly, part of the 50S ribosomal subunit. Forms a cluster with proteins L14 and L19. Methylated by PrmB.

Its function is as follows. One of the primary rRNA binding proteins, it binds directly near the 3'-end of the 23S rRNA, where it nucleates assembly of the 50S subunit. This is Large ribosomal subunit protein uL3 from Yersinia pseudotuberculosis serotype O:1b (strain IP 31758).